Consider the following 167-residue polypeptide: Iron-sulfur cluster assembly enzyme ISCU (167 aa).

The N-terminal 34 residues, 1-34 (MAAAGAFRLRRAASALLLRSPRLPARELSAPARL), are a transit peptide targeting the mitochondrion. The residue at position 14 (Ser-14) is a Phosphoserine; by MTOR. Residue Pro-46 participates in Zn(2+) binding. The active-site Cysteine persulfide intermediate is the Cys-69. Cys-69 bears the Cysteine persulfide mark. Positions 70, 71, 95, 112, and 138 each coordinate Zn(2+). Cys-138 serves as the catalytic Cysteine persulfide intermediate. Cys-138 carries the cysteine persulfide modification.

It belongs to the NifU family. As to quaternary structure, homodimer; Tyr-35-mediated dimerization of two iron- and sulfide-containing ISCU subunit bind to the cysteine desulfurase complex. Component of the mitochondrial core iron-sulfur cluster (ISC) complex composed of NFS1, LYRM4, NDUFAB1, ISCU, FXN, and FDX2; this complex is an heterohexamer containing two copies of each monomer. Interacts (D-state) with NFS1 (homodimer form); each monomer interacts with the C-terminal regions of each NFS1 monomer. Interacts (monomer form) with FXN (via ferrous form); the interaction is possible when both are bound to the dimeric form of the cysteine desulfurase complex (NFS1:LYRM4) and enhances FXN interaction to the dimeric form of the cysteine desulfurase complex (NFS1:LYRM4). Interacts with GLRX5. Interacts (D-state) with HSPA9. Interacts (S-state) with HSCB; this interaction stimulates the ATPase activity of HSPA9. Component of the cytoplasmic core iron-sulfur cluster (ISC) complex composed at least of NFS1, LYRM4, and ISCU; this complex interacts with FXN. Monomer; each monomer binds to the C-terminal regions of NFS1 (cytoplasmic and homodimer form). Interacts with NFS1 (cytoplasmic and homodimer form); this interaction promotes de novo iron-sulfur cluster formation. Interacts with HSCB (cytoplasmic form); this interaction stabilizes the (Fe-S) clusters on ISCU. Post-translationally, phosphorylation at Ser-14 is required for ISCU protein stabilization in the cytosol, whereas dephosphorylation of Ser-14, due to the inhibition of mTORC1 (mammalian target of rapamycin complex 1) complex, leads to degradation of the precursor form and ultimately to a decrease in the mitochondrial mature form. In terms of processing, cysteine persulfide is reduced by thiol-containing molecules such as glutathione and L-cysteine. As to expression, detected in heart, liver, skeletal muscle, brain, pancreas, kidney, lung and placenta.

It localises to the mitochondrion. Its subcellular location is the cytoplasm. The protein localises to the nucleus. Mitochondrial scaffold protein, of the core iron-sulfur cluster (ISC) assembly complex, that provides the structural architecture on which the [2Fe-2S] clusters are assembled. The core iron-sulfur cluster (ISC) assembly complex is involved in the de novo synthesis of a [2Fe-2S] cluster, the first step of the mitochondrial iron-sulfur protein biogenesis. This process is initiated by the cysteine desulfurase complex (NFS1:LYRM4:NDUFAB1) that produces persulfide which is delivered on the scaffold protein ISCU in a FXN-dependent manner. Then this complex is stabilized by FDX2 which provides reducing equivalents to accomplish the [2Fe-2S] cluster assembly. Finally, the [2Fe-2S] cluster is transferred from ISCU to chaperone proteins, including HSCB, HSPA9 and GLRX5. Exists as two slow interchanging conformational states, a structured (S) and disordered (D) form. May modulate NFS1 desulfurase activity in a zinc-dependent manner. Modulates the interaction between FXN and the cysteine desulfurase complex. In terms of biological role, cytoplasmic scaffold protein, of the cytoplasmic core iron-sulfur cluster (ISC) assembly complex that provides the structural architecture on which the Fe-S clusters are assembled and may be involved in the cytoplasmic iron-sulfur protein biogenesis. This chain is Iron-sulfur cluster assembly enzyme ISCU, found in Homo sapiens (Human).